We begin with the raw amino-acid sequence, 792 residues long: Type 2 topoisomerase subunit B (792 aa).

The Toprim domain occupies 423-537 (CEIFLVEGDS…EGYVYIAEPP (115 aa)). 3 residues coordinate Mg(2+): E429, D502, and D504.

It belongs to the type II topoisomerase GyrB family. As to quaternary structure, heterotetramer, composed of two GyrA and two GyrB chains. In the heterotetramer, 'GyrA' contains the active site tyrosine that forms a transient covalent intermediate with DNA, while 'GyrB' binds cofactors and catalyzes ATP hydrolysis. Requires Mg(2+) as cofactor. Mn(2+) serves as cofactor. Ca(2+) is required as a cofactor.

The protein resides in the cytoplasm. The enzyme catalyses ATP-dependent breakage, passage and rejoining of double-stranded DNA.. In terms of biological role, a type II topoisomerase. Despite its similarity to DNA gyrase, this enzyme is not able to supercoil DNA, and instead acts like topoisomerase IV. Relaxes both positively and negatively supercoiled DNA in an ATP-dependent fashion, decatenates interlocked circles. If this subunit is reconstituted with GyrA from E.coli the hybrid enzyme supercoils relaxed plasmid DNA; if paired with E.coli ParC supercoiling is not restored. This the first bacteria shown to not contain DNA gyrase, although it has 2 copies of a reverse gyrase that introduces positive supercoils. Type II topoisomerases break and join 2 DNA strands simultaneously in an ATP-dependent manner. This chain is Type 2 topoisomerase subunit B, found in Aquifex aeolicus (strain VF5).